A 907-amino-acid polypeptide reads, in one-letter code: Protein translocase subunit SecA (907 aa).

ATP-binding positions include Gln87, 105–109 (GEGKT), and Asp512. The tract at residues 834-907 (QSDVDDMEQR…KYKQCHGKLS (74 aa)) is disordered. A compositionally biased stretch (basic and acidic residues) spans 840–856 (MEQRRREEEAKIQRDYQ). The span at 865 to 876 (DESQASSDNTPK) shows a compositional bias: polar residues. A compositionally biased stretch (basic and acidic residues) spans 878–887 (MIREGDKVGR). 4 residues coordinate Zn(2+): Cys891, Cys893, Cys902, and His903. The segment covering 897-907 (KKYKQCHGKLS) has biased composition (basic residues).

It belongs to the SecA family. As to quaternary structure, monomer and homodimer. Part of the essential Sec protein translocation apparatus which comprises SecA, SecYEG and auxiliary proteins SecDF-YajC and YidC. Zn(2+) is required as a cofactor.

It is found in the cell inner membrane. The protein resides in the cytoplasm. The enzyme catalyses ATP + H2O + cellular proteinSide 1 = ADP + phosphate + cellular proteinSide 2.. Functionally, part of the Sec protein translocase complex. Interacts with the SecYEG preprotein conducting channel. Has a central role in coupling the hydrolysis of ATP to the transfer of proteins into and across the cell membrane, serving both as a receptor for the preprotein-SecB complex and as an ATP-driven molecular motor driving the stepwise translocation of polypeptide chains across the membrane. The polypeptide is Protein translocase subunit SecA (Shewanella denitrificans (strain OS217 / ATCC BAA-1090 / DSM 15013)).